The primary structure comprises 88 residues: Ribonuclease P protein component 1 (88 aa).

This sequence belongs to the eukaryotic/archaeal RNase P protein component 1 family. In terms of assembly, consists of a catalytic RNA component and at least 4-5 protein subunits.

It is found in the cytoplasm. The catalysed reaction is Endonucleolytic cleavage of RNA, removing 5'-extranucleotides from tRNA precursor.. Functionally, part of ribonuclease P, a protein complex that generates mature tRNA molecules by cleaving their 5'-ends. This Nitrosopumilus maritimus (strain SCM1) protein is Ribonuclease P protein component 1.